We begin with the raw amino-acid sequence, 932 residues long: MRIREQTILALLSPGLPPVTGQHVLDLSEPGWTVSSKALNRTVPGRLPSQVHLDLFEAGVIATMGSMILTFAGLRMPTGRTPATLLLGCELTDHESTWLVFDGLDTFTTITFCDQIIGSTYNQFRQYHFDVSQVLKECKQEGPVLSINFGSAPNIANAIANGPSAEEWPAGVQITNEYPNRWYIRKEQSDFGWDWGPAFAPAGPWKPAYIVQNKNPDRLYVLNTDLDIYRRGQINHLPPDQSQSWVVNASIDVLGSVPQWPSMSVEIKDAYSGVVLSSGLLENVTVSGNSVTGVTVVDGRTPKLWWPNGMGDQSLYNVTIAVHNHRNQVVAEVMKRTGFRTIFLNQRNITEEQLAQGVAPGANWHFEINGREFYAKGSNIIPPDAFWPRVTPSRMERLFDAVTAGNQNMLRVWASGAYLHDFIYDLADEKGILLWSEFQFSDALYPVDDAFLENVAAEVVYNVRRVNHHPSLALWAGGNEIESLMLPMVRRADHKGYAKYVGEYEKLYISLILPLVYENTRSITYSPSSTTEGYLHVNLSAPVPMTERYSNTTPGSYYGDTDYYNYDTSVSFNYHKYPVGRFANEFGFHSMPSLQTWQQAVDPKDLYFNSSVVVLRNHHYTAGGLFTDNYQNSSRGMGEMTMGVESYYPIPSKSDPVANFSAWCHATQLFQADMYKAQIQFYRRGSGMPERQLGSLYWQLEDTWQAPTWAGIEYDGRWKMLHYVARDIYEPIIVSPFWNYTTGDLEVYVTSDLWEPAQGTVNLTWVDLSGKSIAGNAGTPESIPFSVGALNATDVYSANVADLSPPDLTDSILILSLAGEGYLPNARTRSEFRHENQFTPVFPKDLALRDPKLELAYNPDTRTFTVEATAGVSLYTWLDYPAGVVGYFEQNGFVLLPGMKKEIGFVVQEGSVDEDWMRSVTVTSLWDQKVRE.

The first 21 residues, 1-21 (MRIREQTILALLSPGLPPVTG), serve as a signal peptide directing secretion. N-linked (GlcNAc...) asparagine glycans are attached at residues Asn-40, Asn-248, Asn-283, Asn-317, and Asn-348. Residue Glu-480 is the Proton donor of the active site. Residues Asn-538, Asn-609, Asn-632, Asn-659, Asn-739, Asn-762, and Asn-791 are each glycosylated (N-linked (GlcNAc...) asparagine).

Belongs to the glycosyl hydrolase 2 family. Beta-mannosidase A subfamily. As to quaternary structure, homodimer.

The protein resides in the secreted. It carries out the reaction Hydrolysis of terminal, non-reducing beta-D-mannose residues in beta-D-mannosides.. It functions in the pathway glycan metabolism; N-glycan degradation. Exoglycosidase that cleaves the single beta-linked mannose residue from the non-reducing end of beta-mannosidic oligosaccharides of various complexity and length. Involved in the degradation of polymeric mannan and galactomannan. The polypeptide is Beta-mannosidase A (mndA) (Aspergillus clavatus (strain ATCC 1007 / CBS 513.65 / DSM 816 / NCTC 3887 / NRRL 1 / QM 1276 / 107)).